A 298-amino-acid chain; its full sequence is Inosose dehydratase (298 aa).

Belongs to the IolE/MocC family. The cofactor is glutathione. Co(2+) is required as a cofactor. Mn(2+) serves as cofactor.

It carries out the reaction scyllo-inosose = 3D-3,5/4-trihydroxycyclohexane-1,2-dione + H2O. Its pathway is polyol metabolism; myo-inositol degradation into acetyl-CoA; acetyl-CoA from myo-inositol: step 2/7. Functionally, catalyzes the dehydration of inosose (2-keto-myo-inositol, 2KMI or 2,4,6/3,5-pentahydroxycyclohexanone) to 3D-(3,5/4)-trihydroxycyclohexane-1,2-dione (D-2,3-diketo-4-deoxy-epi-inositol). The protein is Inosose dehydratase of Bacillus thuringiensis (strain Al Hakam).